The primary structure comprises 356 residues: Rhomboid-related protein 1 (356 aa).

7 helical membrane-spanning segments follow: residues 107 to 129, 172 to 194, 201 to 223, 227 to 249, 256 to 275, 290 to 312, and 319 to 341; these read WCPPPIFMLLITIIQVGIFFFYW, YMFLHAGLNHLLGNVIIQLLVGI, KIWRIGPIYLLAVTSGSLLQYAI, SLLVGASAGVYALIFAHVANVIL, LRWIRVLVLFVFIFLDFGGA, HLAHIAGAVTGLFFGYVVLYNVV, and IIRYVCLFLYSAFFATTIIFVIV. The active-site Nucleophile is the serine 233. Histidine 293 is an active-site residue.

Belongs to the peptidase S54 family.

Its subcellular location is the membrane. It catalyses the reaction Cleaves type-1 transmembrane domains using a catalytic dyad composed of serine and histidine that are contributed by different transmembrane domains.. Serine protease which activates lin-3 isoform a in the proximal vulva precursor cells (VPC) during vulva development to transmit the inductive anchor cell signal to the distal VPCs. The chain is Rhomboid-related protein 1 from Caenorhabditis elegans.